The chain runs to 114 residues: Probable 4-amino-4-deoxy-L-arabinose-phosphoundecaprenol flippase subunit ArnE (114 aa).

2 helical membrane passes run 41–61 and 68–88; these read GWLWLALFSLGLGLLVWLLVL and VAYPMLSLNFVFITLIAHFVF. An EamA domain is found at 43-112; the sequence is LWLALFSLGL…VIGGVLLLSR (70 aa).

This sequence belongs to the ArnE family. In terms of assembly, heterodimer of ArnE and ArnF.

The protein resides in the cell inner membrane. It participates in bacterial outer membrane biogenesis; lipopolysaccharide biosynthesis. Translocates 4-amino-4-deoxy-L-arabinose-phosphoundecaprenol (alpha-L-Ara4N-phosphoundecaprenol) from the cytoplasmic to the periplasmic side of the inner membrane. The polypeptide is Probable 4-amino-4-deoxy-L-arabinose-phosphoundecaprenol flippase subunit ArnE (Pseudomonas fluorescens (strain ATCC BAA-477 / NRRL B-23932 / Pf-5)).